A 544-amino-acid chain; its full sequence is Membrane protein insertase YidC (544 aa).

A helical membrane pass occupies residues 6 to 26 (NLLLIALLFVTFMLWQAWETD). Positions 112–132 (SGLTGKNGPDNPANGPRPLFT) are disordered. 4 consecutive transmembrane segments (helical) span residues 343 to 363 (KFLH…TFIV), 418 to 438 (LGGC…YYML), 456 to 476 (LSAQ…MFFI), and 497 to 517 (PVIF…YYIV).

It belongs to the OXA1/ALB3/YidC family. Type 1 subfamily. As to quaternary structure, interacts with the Sec translocase complex via SecD. Specifically interacts with transmembrane segments of nascent integral membrane proteins during membrane integration.

It is found in the cell inner membrane. Its function is as follows. Required for the insertion and/or proper folding and/or complex formation of integral membrane proteins into the membrane. Involved in integration of membrane proteins that insert both dependently and independently of the Sec translocase complex, as well as at least some lipoproteins. Aids folding of multispanning membrane proteins. The chain is Membrane protein insertase YidC from Pectobacterium carotovorum subsp. carotovorum (strain PC1).